Consider the following 506-residue polypeptide: Cytochrome P450 52B1 (506 aa).

Residue Cys-451 participates in heme binding.

It belongs to the cytochrome P450 family. Heme is required as a cofactor.

In terms of biological role, together with an NADPH cytochrome P450 the enzyme system catalyzes the terminal hydroxylation as the first step in the assimilation of alkanes and fatty acids. The protein is Cytochrome P450 52B1 (CYP52B1) of Candida tropicalis (Yeast).